Consider the following 459-residue polypeptide: Autophagy-related protein 18 (459 aa).

WD repeat units follow at residues 1 to 39 (MTSP…RIFS) and 188 to 228 (AHRS…KLYQ). Positions 229–232 (FRRG) are necessary for proper localization to vacuole membrane. Positions 229-233 (FRRGT) match the L/FRRG motif motif. A WD 3 repeat occupies 233–272 (TYPSTIYSMSFNLSSTLLCVSSTSDTIHIFRLGAPPGNTT). The interval 264–339 (LGAPPGNTTP…RGSGSFSSML (76 aa)) is disordered. The segment covering 265–277 (GAPPGNTTPAGAP) has biased composition (low complexity). The span at 285–296 (RQDRWSRARSYD) shows a compositional bias: basic and acidic residues. Over residues 319–330 (PGAGNNQGGHTR) the composition is skewed to gly residues. One copy of the WD 4 repeat lies at 393–433 (APGGPLRSVVAMSSSSPQVMVVTSDGGFYVYNIDMEHGGEG).

This sequence belongs to the WD repeat PROPPIN family. Component of the PI(3,5)P2 regulatory complex. Interacts with ATG2 and ATG9. The ATG2-ATG18 complex is essential for autophagosome formation.

It is found in the preautophagosomal structure membrane. The protein resides in the vacuole membrane. The protein localises to the endosome membrane. Functionally, component of the PI(3,5)P2 regulatory complex that regulates both the synthesis and turnover of phosphatidylinositol 3,5-bisphosphate (PtdIns(3,5)P2). Plays an important role in osmotically-induced vacuole fragmentation. Required for cytoplasm to vacuole transport (Cvt) vesicle formation, pexophagy and starvation-induced autophagy. Involved in correct ATG9 trafficking to the pre-autophagosomal structure. With ATG2, protects ATG8 from ATG4-mediated cleavage. Autophagy is required for proper vegetative growth, asexual/sexual reproduction, and full virulence. Autophagy is particularly involved in the biosynthesis of deoxynivalenol (DON), an important virulence determinant. This is Autophagy-related protein 18 from Gibberella zeae (strain ATCC MYA-4620 / CBS 123657 / FGSC 9075 / NRRL 31084 / PH-1) (Wheat head blight fungus).